The sequence spans 1135 residues: Topless-related protein 4 (1135 aa).

Positions 4–36 (LSRELVFLILQFLDEEKFKDTVHRLEKESGFFF) constitute a LisH domain. Residues 34 to 92 (FFFNMRYFEDSVTAGEWDDVEKYLSGFTKVDDNRYSMKIFFEIRKQKYLEALDKKDHAK) enclose the CTLH domain. Phosphoserine is present on Ser214. The tract at residues 281–303 (LKRERPRSPPTNSLSMDYQTADS) is disordered. The span at 290 to 303 (PTNSLSMDYQTADS) shows a compositional bias: polar residues. WD repeat units follow at residues 355 to 395 (SQGS…KLVS), 417 to 456 (EYTA…DLRN), 462 to 503 (AHAG…KLHT), 506 to 547 (GHEA…SRVD), 550 to 593 (APGR…VKRT), 597 to 636 (LGKR…LLSS), 638 to 680 (AAEG…RILH), 776 to 815 (LLPA…RNLL), 843 to 881 (NKED…TMTT), 884 to 924 (APPP…VKSK), 927 to 966 (GHQK…KQAS), and 1020 to 1059 (ESSG…LKCR). A disordered region spans residues 1095–1135 (DGGVHVIEPPGPEGKWGISAPPENGAGPSVSSAPGSDQQPR). A compositionally biased stretch (low complexity) spans 1119-1135 (GAGPSVSSAPGSDQQPR).

In terms of assembly, tetramer. Interacts with WUS (via the C-terminal domain). Interacts with SPL (via EAR motif). Interacts with SPEAR3/TIE1. Binds to and corepresses GAF1/IDD2 at the promoter of GA20OX2 gene.

The protein resides in the nucleus. Transcription corepressor of Zinc finger transcription factors GAF1/IDD2 and ENY/IDD1 in regulation of gibberellin homeostasis and signaling. This chain is Topless-related protein 4 (TPR4), found in Arabidopsis thaliana (Mouse-ear cress).